The sequence spans 338 residues: Oxygen-dependent coproporphyrinogen-III oxidase (338 aa).

Substrate is bound at residue Ser104. Residues His108 and His118 each coordinate a divalent metal cation. His118 serves as the catalytic Proton donor. Substrate is bound at residue 120–122; that stretch reads NYR. Positions 152 and 182 each coordinate a divalent metal cation. The interval 274-309 is important for dimerization; sequence YVEFNLVYDRGTIFGLQTNGRTESILMSLPPLVRWE.

The protein belongs to the aerobic coproporphyrinogen-III oxidase family. In terms of assembly, homodimer. The cofactor is a divalent metal cation.

The protein resides in the cytoplasm. It carries out the reaction coproporphyrinogen III + O2 + 2 H(+) = protoporphyrinogen IX + 2 CO2 + 2 H2O. The protein operates within porphyrin-containing compound metabolism; protoporphyrin-IX biosynthesis; protoporphyrinogen-IX from coproporphyrinogen-III (O2 route): step 1/1. Involved in the heme and chlorophyll biosynthesis. Catalyzes the aerobic oxidative decarboxylation of propionate groups of rings A and B of coproporphyrinogen-III to yield the vinyl groups in protoporphyrinogen-IX. The sequence is that of Oxygen-dependent coproporphyrinogen-III oxidase from Thermosynechococcus vestitus (strain NIES-2133 / IAM M-273 / BP-1).